Here is a 274-residue protein sequence, read N- to C-terminus: Nitrogenase iron protein (274 aa).

8-15 (GKGGIGKS) provides a ligand contact to ATP. Residue Cys-94 coordinates [4Fe-4S] cluster. Arg-97 bears the ADP-ribosylarginine; by dinitrogenase reductase ADP-ribosyltransferase mark. Residue Cys-131 participates in [4Fe-4S] cluster binding.

The protein belongs to the NifH/BchL/ChlL family. As to quaternary structure, homodimer. [4Fe-4S] cluster serves as cofactor. The reversible ADP-ribosylation of Arg-97 inactivates the nitrogenase reductase and regulates nitrogenase activity.

It catalyses the reaction N2 + 8 reduced [2Fe-2S]-[ferredoxin] + 16 ATP + 16 H2O = H2 + 8 oxidized [2Fe-2S]-[ferredoxin] + 2 NH4(+) + 16 ADP + 16 phosphate + 6 H(+). Functionally, the key enzymatic reactions in nitrogen fixation are catalyzed by the nitrogenase complex, which has 2 components: the iron protein and the molybdenum-iron protein. The sequence is that of Nitrogenase iron protein from Chlorobium luteolum (strain DSM 273 / BCRC 81028 / 2530) (Pelodictyon luteolum).